The following is a 650-amino-acid chain: Tudor domain-containing protein 3 (650 aa).

The segment at 147 to 169 is disordered; the sequence is TKTFGGGGNAGSNLNPGAGGSRN. Residues 192–232 form the UBA domain; the sequence is LVDEKALRHITEMGFCKDAARQALMDHSNNVEAALNFLLTG. 3 disordered regions span residues 233–271, 286–406, and 427–447; these read SKPKVVQGPPPRGKGKGRGRTRGEEDDELTSARPSAPST, EDNK…SCNN, and HQNSTTEGSHQKRGKKDDQRY. Composition is skewed to basic and acidic residues over residues 320-337 and 366-388; these read TRNDTRAPRNEKPPRFQK and HWMEDRNKCERGYPRNDRLKDFS. Polar residues predominate over residues 390–406; it reads PPSNHQNEGSYRKSCNN. One can recognise a Tudor domain in the interval 554–614; that stretch reads SWRSGDECLA…RPIQAEAWEE (61 aa). Residues 616 to 650 form a disordered region; it reads GEFGDSLDFRRGGDGQPRRSTRPTQQFYQPPRARN. Positions 622–632 are enriched in basic and acidic residues; the sequence is LDFRRGGDGQP.

Component of mRNA stress granules.

The protein localises to the cytoplasm. It localises to the nucleus. Functionally, scaffolding protein that specifically recognizes and binds dimethylarginine-containing proteins. Plays a role in the regulation of translation of target mRNAs by binding Arg/Gly-rich motifs (GAR) in dimethylarginine-containing proteins. In nucleus, acts as a coactivator: recognizes and binds asymmetric dimethylation on the core histone tails associated with transcriptional activation (H3R17me2a and H4R3me2a) and recruits proteins at these arginine-methylated loci. In cytoplasm, acts as an antiviral factor that participates in the assembly of stress granules together with G3BP1. In Xenopus laevis (African clawed frog), this protein is Tudor domain-containing protein 3 (tdrd3).